Here is a 234-residue protein sequence, read N- to C-terminus: Opacity protein opA55 (234 aa).

A1 is a signal peptide.

This sequence belongs to the opacity porin family.

The protein localises to the cell outer membrane. In terms of biological role, implicated in a number of adherence functions. OPA proteins are implicated in pathogenesis and are subject to phase variation. The chain is Opacity protein opA55 (opaE) from Neisseria gonorrhoeae.